A 234-amino-acid chain; its full sequence is tRNA (guanine-N(1)-)-methyltransferase (234 aa).

Residues Gly-112 and 132–137 each bind S-adenosyl-L-methionine; that span reads IGDFIL.

The protein belongs to the RNA methyltransferase TrmD family. In terms of assembly, homodimer.

It localises to the cytoplasm. It catalyses the reaction guanosine(37) in tRNA + S-adenosyl-L-methionine = N(1)-methylguanosine(37) in tRNA + S-adenosyl-L-homocysteine + H(+). In terms of biological role, specifically methylates guanosine-37 in various tRNAs. The protein is tRNA (guanine-N(1)-)-methyltransferase of Campylobacter jejuni subsp. doylei (strain ATCC BAA-1458 / RM4099 / 269.97).